We begin with the raw amino-acid sequence, 157 residues long: uncharacterized protein (157 aa).

Positions Asn33–Leu134 constitute an HD domain.

This is an uncharacterized protein from Clostridium beijerinckii (strain ATCC 51743 / NCIMB 8052) (Clostridium acetobutylicum).